Reading from the N-terminus, the 1115-residue chain is Eukaryotic translation initiation factor 2-alpha kinase 3 (1115 aa).

The first 29 residues, 1–29 (MERATGPGSLARTLLLPLLLGLVAGTVTA), serve as a signal peptide directing secretion. Residues 30–514 (RRTSDLLAPT…PNYKNIRKKD (485 aa)) are Extracellular-facing. The tract at residues 74 to 101 (SEALPAAAGEQEAREPEPEPEEEPDIRP) is disordered. N-linked (GlcNAc...) asparagine glycosylation occurs at Asn-259. A helical membrane pass occupies residues 515–535 (PVLLLHWWKEIVGTIVFCIVA). The Cytoplasmic segment spans residues 536-1115 (TTFIVRRLFH…SSPHSPLPSN (580 aa)). The Protein kinase domain maps to 593–1076 (FEPIQCMGRG…AASIIENAIF (484 aa)). 599 to 607 (MGRGGFGVV) contributes to the ATP binding site. Phosphotyrosine; by autocatalysis is present on Tyr-619. Lys-622 serves as a coordination point for ATP. Residues 647–887 (EHPGIVRYFN…SPKVYLYIQM (241 aa)) form an insert loop region. Ser-715 is subject to Phosphoserine. Phosphothreonine is present on Thr-802. Disordered stretches follow at residues 807–832 (VFED…VGNH) and 841–860 (RHSG…SRPT). Residues 845-860 (SKSSEPTVSVSPSRPT) are compositionally biased toward polar residues. Residue Asp-936 is the Proton acceptor of the active site. Thr-981 bears the Phosphothreonine mark. The segment at 1087–1115 (LRQRSRSMSSPGAKHSRHSSSPHSPLPSN) is disordered. A Phosphoserine modification is found at Ser-1093.

The protein belongs to the protein kinase superfamily. Ser/Thr protein kinase family. GCN2 subfamily. In terms of assembly, forms dimers with HSPA5/BIP in resting cells. Homotetramerizes in response to endoplasmic reticulum (ER) stress, leading to its activation. Interacts with HSP90B1/GRP94. Interacts with DNAJC3; inhibiting EIF2AK3/PERK activity. Interacts with ATAD3A; ATAD3A and EIF2S1/eIF-2-alpha occupy a common binding site within the cytoplasmic loop of EIF2AK3/PERK, leading to prevent EIF2AK3/PERK association with its substrate EIF2S1/eIF-2-alpha. Interacts with MFN2. Interacts with TMEM33. Interacts with PDIA6. Interacts with LACC1. In terms of processing, oligomerization of the N-terminal ER luminal domain by ER stress promotes EIF2AK3/PERK trans-autophosphorylation of the C-terminal cytoplasmic kinase domain at multiple residues including Thr-981 on the kinase activation loop. Autophosphorylated at Tyr-619 following endoplasmic reticulum stress, leading to activate its activity. Dephosphorylated at Tyr-619 by PTPN1/PTP1B, leading to inactivate its enzyme activity. Phosphorylation at Thr-802 by AKT (AKT1, AKT2 and/or AKT3) inactivates EIF2AK3/PERK. Post-translationally, ADP-ribosylated by PARP16 upon ER stress, which increases kinase activity.

The protein resides in the endoplasmic reticulum membrane. The catalysed reaction is L-seryl-[protein] + ATP = O-phospho-L-seryl-[protein] + ADP + H(+). It carries out the reaction L-threonyl-[protein] + ATP = O-phospho-L-threonyl-[protein] + ADP + H(+). The enzyme catalyses L-tyrosyl-[protein] + ATP = O-phospho-L-tyrosyl-[protein] + ADP + H(+). Its activity is regulated as follows. Inhibited by HSPA5/BIP in absence of stress. Perturbation in protein folding in the endoplasmic reticulum (ER) promotes reversible dissociation from HSPA5/BIP and oligomerization, resulting in trans-autophosphorylation and kinase activity induction. Inactivated following phosphorylation at Thr-802 by AKT (AKT1, AKT2 and/or AKT3). Inhibited by ATAD3A at mitochondria-endoplasmic reticulum contact sites, providing a safe haven for mitochondrial protein translation during ER stress. Its function is as follows. Metabolic-stress sensing protein kinase that phosphorylates the alpha subunit of eukaryotic translation initiation factor 2 (EIF2S1/eIF-2-alpha) in response to various stress, such as unfolded protein response (UPR). Key effector of the integrated stress response (ISR) to unfolded proteins: EIF2AK3/PERK specifically recognizes and binds misfolded proteins, leading to its activation and EIF2S1/eIF-2-alpha phosphorylation. EIF2S1/eIF-2-alpha phosphorylation in response to stress converts EIF2S1/eIF-2-alpha in a global protein synthesis inhibitor, leading to a global attenuation of cap-dependent translation, while concomitantly initiating the preferential translation of ISR-specific mRNAs, such as the transcriptional activators ATF4 and QRICH1, and hence allowing ATF4- and QRICH1-mediated reprogramming. The EIF2AK3/PERK-mediated unfolded protein response increases mitochondrial oxidative phosphorylation by promoting ATF4-mediated expression of COX7A2L/SCAF1, thereby increasing formation of respiratory chain supercomplexes. In contrast to most subcellular compartments, mitochondria are protected from the EIF2AK3/PERK-mediated unfolded protein response due to EIF2AK3/PERK inhibition by ATAD3A at mitochondria-endoplasmic reticulum contact sites. In addition to EIF2S1/eIF-2-alpha, also phosphorylates NFE2L2/NRF2 in response to stress, promoting release of NFE2L2/NRF2 from the BCR(KEAP1) complex, leading to nuclear accumulation and activation of NFE2L2/NRF2. Serves as a critical effector of unfolded protein response (UPR)-induced G1 growth arrest due to the loss of cyclin-D1 (CCND1). Involved in control of mitochondrial morphology and function. This is Eukaryotic translation initiation factor 2-alpha kinase 3 from Bos taurus (Bovine).